We begin with the raw amino-acid sequence, 207 residues long: MRYLVMMFALLVSVTLVSPRPANAVDNQLSVVDGQGRTLTVQQAETFLNGVFPLDRNRLTREWFHSGRATYHVAGPGADEFEGTLELGYQVGFPWSLGVGINFSYTTPNILIDGGDITQPPFGLDTIITPNLFPGVSISADLGNGPGIQEVATFSVDVKGAKGAVAVSNAHGTVTGAAGGVLLRPFARLIASTGDSVTTYGEPWNMN.

The first 24 residues, 1–24, serve as a signal peptide directing secretion; the sequence is MRYLVMMFALLVSVTLVSPRPANA.

It belongs to the mycobacterial porin (TC 1.B.24) family. In terms of assembly, octamers. Probably forms a goblet with the wide end on the exterior of the outer membrane and a central channel. It is not known if mixed oligomers of MspD with other Msp subunits form in vivo.

It is found in the cell outer membrane. Its subcellular location is the secreted. The protein localises to the cell wall. In terms of biological role, a backup porin induced when MspA, the major porin, is deleted. It probably forms a water-filled channel which favors the permeation of cations. There are about 2400 porins in wild-type, 800 in an mspA deletion and 150 in a double mspA-mspC deletion. This Mycolicibacterium smegmatis (strain ATCC 700084 / mc(2)155) (Mycobacterium smegmatis) protein is Porin MspD (mspD).